We begin with the raw amino-acid sequence, 309 residues long: 4-hydroxy-3-methylbut-2-enyl diphosphate reductase (309 aa).

Cys12 lines the [4Fe-4S] cluster pocket. (2E)-4-hydroxy-3-methylbut-2-enyl diphosphate contacts are provided by His43 and His77. Positions 43 and 77 each coordinate dimethylallyl diphosphate. Residues His43 and His77 each coordinate isopentenyl diphosphate. Cys99 is a [4Fe-4S] cluster binding site. His127 provides a ligand contact to (2E)-4-hydroxy-3-methylbut-2-enyl diphosphate. Dimethylallyl diphosphate is bound at residue His127. His127 lines the isopentenyl diphosphate pocket. Glu129 functions as the Proton donor in the catalytic mechanism. Thr167 provides a ligand contact to (2E)-4-hydroxy-3-methylbut-2-enyl diphosphate. Cys197 contacts [4Fe-4S] cluster. Residues Ser225, Ser226, Asn227, and Ser269 each coordinate (2E)-4-hydroxy-3-methylbut-2-enyl diphosphate. The dimethylallyl diphosphate site is built by Ser225, Ser226, Asn227, and Ser269. Ser225, Ser226, Asn227, and Ser269 together coordinate isopentenyl diphosphate.

The protein belongs to the IspH family. Requires [4Fe-4S] cluster as cofactor.

It carries out the reaction isopentenyl diphosphate + 2 oxidized [2Fe-2S]-[ferredoxin] + H2O = (2E)-4-hydroxy-3-methylbut-2-enyl diphosphate + 2 reduced [2Fe-2S]-[ferredoxin] + 2 H(+). The catalysed reaction is dimethylallyl diphosphate + 2 oxidized [2Fe-2S]-[ferredoxin] + H2O = (2E)-4-hydroxy-3-methylbut-2-enyl diphosphate + 2 reduced [2Fe-2S]-[ferredoxin] + 2 H(+). It participates in isoprenoid biosynthesis; dimethylallyl diphosphate biosynthesis; dimethylallyl diphosphate from (2E)-4-hydroxy-3-methylbutenyl diphosphate: step 1/1. Its pathway is isoprenoid biosynthesis; isopentenyl diphosphate biosynthesis via DXP pathway; isopentenyl diphosphate from 1-deoxy-D-xylulose 5-phosphate: step 6/6. Its function is as follows. Catalyzes the conversion of 1-hydroxy-2-methyl-2-(E)-butenyl 4-diphosphate (HMBPP) into a mixture of isopentenyl diphosphate (IPP) and dimethylallyl diphosphate (DMAPP). Acts in the terminal step of the DOXP/MEP pathway for isoprenoid precursor biosynthesis. The polypeptide is 4-hydroxy-3-methylbut-2-enyl diphosphate reductase (Wolbachia pipientis wMel).